A 637-amino-acid chain; its full sequence is Pentatricopeptide repeat-containing protein At1g12300, mitochondrial (637 aa).

The N-terminal 95 residues, 1 to 95 (MVKLMIRRLS…PTVIDFSRLF (95 aa)), are a transit peptide targeting the mitochondrion. PPR repeat units lie at residues 87–121 (TVIDFSRLFSAIAKTKQYDLVLALCKQMELKGIAH), 122–156 (NLYTLSIMINCFCRCRKLCLAFSAMGKIIKLGYEP), 157–191 (NTITFSTLINGLCLEGRVSEALELVDRMVEMGHKP), 192–226 (DLITINTLVNGLCLSGKEAEAMLLIDKMVEYGCQP), 227–261 (NAVTYGPVLNVMCKSGQTALAMELLRKMEERNIKL), 262–296 (DAVKYSIIIDGLCKHGSLDNAFNLFNEMEMKGITT), 297–331 (NIITYNILIGGFCNAGRWDDGAKLLRDMIKRKINP), 332–366 (NVVTFSVLIDSFVKEGKLREAEELHKEMIHRGIAP), 367–401 (DTITYTSLIDGFCKENHLDKANQMVDLMVSKGCDP), 402–436 (NIRTFNILINGYCKANRIDDGLELFRKMSLRGVVA), 437–471 (DTVTYNTLIQGFCELGKLNVAKELFQEMVSRKVPP), 472–506 (NIVTYKILLDGLCDNGESEKALEIFEKIEKSKMEL), 507–541 (DIGIYNIIIHGMCNASKVDDAWDLFCSLPLKGVKP), 542–576 (GVKTYNIMIGGLCKKGPLSEAELLFRKMEEDGHAP), and 577–611 (DGWTYNILIRAHLGDGDATKSVKLIEELKRCGFSV).

It belongs to the PPR family. P subfamily.

The protein localises to the mitochondrion. The polypeptide is Pentatricopeptide repeat-containing protein At1g12300, mitochondrial (Arabidopsis thaliana (Mouse-ear cress)).